Reading from the N-terminus, the 254-residue chain is 3-deoxy-manno-octulosonate cytidylyltransferase (254 aa).

It belongs to the KdsB family.

The protein localises to the cytoplasm. It catalyses the reaction 3-deoxy-alpha-D-manno-oct-2-ulosonate + CTP = CMP-3-deoxy-beta-D-manno-octulosonate + diphosphate. Its pathway is nucleotide-sugar biosynthesis; CMP-3-deoxy-D-manno-octulosonate biosynthesis; CMP-3-deoxy-D-manno-octulosonate from 3-deoxy-D-manno-octulosonate and CTP: step 1/1. It functions in the pathway bacterial outer membrane biogenesis; lipopolysaccharide biosynthesis. Its function is as follows. Activates KDO (a required 8-carbon sugar) for incorporation into bacterial lipopolysaccharide in Gram-negative bacteria. This is 3-deoxy-manno-octulosonate cytidylyltransferase from Bordetella parapertussis (strain 12822 / ATCC BAA-587 / NCTC 13253).